The chain runs to 379 residues: Cytochrome b (379 aa).

The next 4 membrane-spanning stretches (helical) occupy residues 34–54 (FGSLLGICLITQILTGLLLAM), 78–99 (WLIRNLHANGASFFFICIYLHI), 114–134 (WNTGVILLLTLMATAFVGYVL), and 179–199 (FFALHFLLPFLIAGITLIHLT). 2 residues coordinate heme b: H84 and H98. Heme b contacts are provided by H183 and H197. Residue H202 coordinates a ubiquinone. 4 helical membrane-spanning segments follow: residues 227 to 247 (LKDILGFTLMFIPLLILAFFS), 289 to 309 (LGGVLALAASVLILFLIPFLH), 321 to 341 (LSQVLFWFLVANLLILTWIGS), and 348 to 368 (FIIIGQMASFTYFLILLILFP).

The protein belongs to the cytochrome b family. In terms of assembly, the cytochrome bc1 complex contains 11 subunits: 3 respiratory subunits (MT-CYB, CYC1 and UQCRFS1), 2 core proteins (UQCRC1 and UQCRC2) and 6 low-molecular weight proteins (UQCRH/QCR6, UQCRB/QCR7, UQCRQ/QCR8, UQCR10/QCR9, UQCR11/QCR10 and a cleavage product of UQCRFS1). This cytochrome bc1 complex then forms a dimer. Requires heme b as cofactor.

The protein localises to the mitochondrion inner membrane. Component of the ubiquinol-cytochrome c reductase complex (complex III or cytochrome b-c1 complex) that is part of the mitochondrial respiratory chain. The b-c1 complex mediates electron transfer from ubiquinol to cytochrome c. Contributes to the generation of a proton gradient across the mitochondrial membrane that is then used for ATP synthesis. The chain is Cytochrome b (MT-CYB) from Casuarius bennetti (Dwarf cassowary).